The following is a 99-amino-acid chain: Acylphosphatase-1 (99 aa).

An Acylphosphatase-like domain is found at 9–99; the sequence is SVDYEVFGKV…LEHSTFSICK (91 aa). Catalysis depends on residues Arg-24 and Asn-42.

This sequence belongs to the acylphosphatase family.

It catalyses the reaction an acyl phosphate + H2O = a carboxylate + phosphate + H(+). The polypeptide is Acylphosphatase-1 (acyp1) (Xenopus laevis (African clawed frog)).